The following is a 308-amino-acid chain: Glycine--tRNA ligase alpha subunit (308 aa).

The protein belongs to the class-II aminoacyl-tRNA synthetase family. Tetramer of two alpha and two beta subunits.

Its subcellular location is the cytoplasm. It carries out the reaction tRNA(Gly) + glycine + ATP = glycyl-tRNA(Gly) + AMP + diphosphate. This is Glycine--tRNA ligase alpha subunit from Brucella abortus (strain 2308).